The following is a 158-amino-acid chain: Complexin-3 (158 aa).

The segment at 14 to 47 (KNLTGSLGGGEDKGDGDKSAAEAQGMSREEYEEY) is disordered. Residues 23–33 (GEDKGDGDKSA) are compositionally biased toward basic and acidic residues. Residues 39–74 (MSREEYEEYQKQLVEEKMERDAQFTQRKAERATLRS) adopt a coiled-coil conformation. Cysteine methyl ester is present on cysteine 155. Cysteine 155 is lipidated: S-farnesyl cysteine. The propeptide at 156–158 (HIM) is removed in mature form.

This sequence belongs to the complexin/synaphin family. Binds to the SNARE core complex containing SNAP25, VAMP2 and STX1A. In terms of processing, farnesylation mediates presynaptic targeting. As to expression, present in many brain regions, including hippocampus and cerebellum (at protein level). Expressed in the retina (at protein level). Expressed in retinal amacrine cells (at protein level). Expressed in retinal photoreceptor ribbon synapses. Expressed in the retinal inner nuclear layer, at bipolar cells (at protein level). Expressed in cone photoreceptor synaptic terminals (at protein level).

Its subcellular location is the synapse. It is found in the cell membrane. Its function is as follows. Complexin that regulates SNARE protein complex-mediated synaptic vesicle fusion. Required for the maintenance of synaptic ultrastructure in the adult retina. Positively regulates synaptic transmission through synaptic vesicle availability and exocytosis of neurotransmitters at photoreceptor ribbon synapses in the retina. Suppresses tonic photoreceptor activity and baseline 'noise' by suppression of Ca(2+) vesicle tonic release and the facilitation of evoked synchronous and asynchronous Ca(2+) vesicle release. The chain is Complexin-3 (Cplx3) from Mus musculus (Mouse).